A 137-amino-acid chain; its full sequence is Nucleoside diphosphate kinase (137 aa).

Residues Lys-9, Phe-57, Arg-85, Thr-91, Arg-102, and Asn-112 each coordinate ATP. The Pros-phosphohistidine intermediate role is filled by His-115.

It belongs to the NDK family. In terms of assembly, homotetramer. It depends on Mg(2+) as a cofactor.

The protein localises to the cytoplasm. It catalyses the reaction a 2'-deoxyribonucleoside 5'-diphosphate + ATP = a 2'-deoxyribonucleoside 5'-triphosphate + ADP. The catalysed reaction is a ribonucleoside 5'-diphosphate + ATP = a ribonucleoside 5'-triphosphate + ADP. Functionally, major role in the synthesis of nucleoside triphosphates other than ATP. The ATP gamma phosphate is transferred to the NDP beta phosphate via a ping-pong mechanism, using a phosphorylated active-site intermediate. This Desulfotalea psychrophila (strain LSv54 / DSM 12343) protein is Nucleoside diphosphate kinase.